The following is a 412-amino-acid chain: Gamma-glutamyl phosphate reductase (412 aa).

The protein belongs to the gamma-glutamyl phosphate reductase family.

The protein localises to the cytoplasm. It catalyses the reaction L-glutamate 5-semialdehyde + phosphate + NADP(+) = L-glutamyl 5-phosphate + NADPH + H(+). It participates in amino-acid biosynthesis; L-proline biosynthesis; L-glutamate 5-semialdehyde from L-glutamate: step 2/2. In terms of biological role, catalyzes the NADPH-dependent reduction of L-glutamate 5-phosphate into L-glutamate 5-semialdehyde and phosphate. The product spontaneously undergoes cyclization to form 1-pyrroline-5-carboxylate. The protein is Gamma-glutamyl phosphate reductase of Aliarcobacter butzleri (strain RM4018) (Arcobacter butzleri).